Reading from the N-terminus, the 357-residue chain is CCN family member 3 (357 aa).

Residues 1–31 (MQSVQSTSFCLRKQCLCLTFLLLHLLGQVAA) form the signal peptide. Residues 32–105 (TQRCPPQCPG…SNQTGICTAV (74 aa)) enclose the IGFBP N-terminal domain. 6 disulfides stabilise this stretch: Cys-35/Cys-61, Cys-39/Cys-63, Cys-43/Cys-64, Cys-50/Cys-67, Cys-75/Cys-89, and Cys-81/Cys-102. A glycan (N-linked (GlcNAc...) asparagine) is linked at Asn-97. One can recognise a VWFC domain in the interval 108-174 (DNCVFDGVIY…GECCEKWICG (67 aa)). The TSP type-1 domain maps to 205–250 (NCIEQTTEWTACSKSCGMGFSTRVTNRNRQCEMLKQTRLCMVRPCE). Residue Cys-244 is the site of S-palmitoyl cysteine attachment. Cystine bridges form between Cys-264/Cys-301, Cys-281/Cys-315, Cys-292/Cys-331, Cys-295/Cys-333, and Cys-300/Cys-337. Residues 264-338 (CLRTKKSLKA…GTCTCHTNCP (75 aa)) enclose the CTCK domain. N-linked (GlcNAc...) asparagine glycosylation is present at Asn-280.

Belongs to the CCN family. As to quaternary structure, interacts with FBLN1. Interacts (via CTCK domain) with NOTCH1 (via the EGF-like repeat region). Interacts with GJA1/CX43. Interacts with ITGA5:ITGB1, ITGAV:ITGB3 and ITGAV:ITGB5. Interacts with ZDHHC22; the interaction may lead to CCN3 palmitoylation. Post-translationally, may be palmitoylated on Cys-244, which is important for extracellular secretion. Expressed in endothelial cells (at protein level). Expressed in bone marrow and thymic cells.

It localises to the secreted. Its subcellular location is the cytoplasm. It is found in the cell junction. The protein resides in the gap junction. Immediate-early protein playing a role in various cellular processes including proliferation, adhesion, migration, differentiation and survival. Acts by binding to integrins or membrane receptors such as NOTCH1. Essential regulator of hematopoietic stem and progenitor cell function. Inhibits myogenic differentiation through the activation of Notch-signaling pathway. Inhibits vascular smooth muscle cells proliferation by increasing expression of cell-cycle regulators such as CDKN2B or CDKN1A independently of TGFB1 signaling. Ligand of integrins ITGAV:ITGB3 and ITGA5:ITGB1, acts directly upon endothelial cells to stimulate pro-angiogenic activities and induces angiogenesis. In endothelial cells, supports cell adhesion, induces directed cell migration (chemotaxis) and promotes cell survival. Also plays a role in cutaneous wound healing acting as integrin receptor ligand. Supports skin fibroblast adhesion through ITGA5:ITGB1 and ITGA6:ITGB1 and induces fibroblast chemotaxis through ITGAV:ITGB5. Seems to enhance bFGF-induced DNA synthesis in fibroblasts. Involved in bone regeneration as a negative regulator. Enhances the articular chondrocytic phenotype, whereas it repressed the one representing endochondral ossification. Impairs pancreatic beta-cell function, inhibits beta-cell proliferation and insulin secretion. Plays a role as negative regulator of endothelial pro-inflammatory activation reducing monocyte adhesion, its anti-inflammatory effects occur secondary to the inhibition of NF-kappaB signaling pathway. Contributes to the control and coordination of inflammatory processes in atherosclerosis. Attenuates inflammatory pain through regulation of IL1B- and TNF-induced MMP9, MMP2 and CCL2 expression. Inhibits MMP9 expression through ITGB1 engagement. Brain osteoanabolic hormone. Drives osteogenesis in osteochondral skeletal stem cells. During lactation, maintains the maternal skeleton and viability of offspring. This is CCN family member 3 from Homo sapiens (Human).